Reading from the N-terminus, the 660-residue chain is ATPase-like fidgetin (660 aa).

2 disordered regions span residues Lys-141–Phe-186 and Ala-209–Lys-334. Residues Ser-145 to Ser-161 are compositionally biased toward low complexity. Position 177 is a phosphoserine (Ser-177). Over residues Asp-213 to Leu-239 the composition is skewed to polar residues. Positions Ser-240 to Asn-255 are enriched in low complexity. The span at Leu-301–Arg-313 shows a compositional bias: polar residues. Residues Pro-314 to Ser-333 show a composition bias toward low complexity. Gly-419–Thr-426 is a binding site for ATP.

The protein belongs to the AAA ATPase family.

It is found in the nucleus. The polypeptide is ATPase-like fidgetin (alf1) (Schizosaccharomyces pombe (strain 972 / ATCC 24843) (Fission yeast)).